The following is a 1406-amino-acid chain: DNA-directed RNA polymerase subunit beta' (1406 aa).

The Zn(2+) site is built by Cys72, Cys74, Cys87, and Cys90. Positions 462, 464, and 466 each coordinate Mg(2+). 4 residues coordinate Zn(2+): Cys816, Cys889, Cys896, and Cys899.

Belongs to the RNA polymerase beta' chain family. The RNAP catalytic core consists of 2 alpha, 1 beta, 1 beta' and 1 omega subunit. When a sigma factor is associated with the core the holoenzyme is formed, which can initiate transcription. Mg(2+) is required as a cofactor. It depends on Zn(2+) as a cofactor.

The catalysed reaction is RNA(n) + a ribonucleoside 5'-triphosphate = RNA(n+1) + diphosphate. DNA-dependent RNA polymerase catalyzes the transcription of DNA into RNA using the four ribonucleoside triphosphates as substrates. This Psychrobacter sp. (strain PRwf-1) protein is DNA-directed RNA polymerase subunit beta'.